Reading from the N-terminus, the 490-residue chain is MSDRGRTLMVQGTTSDAGKSTLVTALCRWLARRGVAVVPFKPQNMALNSAVTADGGEIGRAQAVQAQACRLAPHTDMNPVLLKPNTDIGAQVIIHGRAVTSMDAAAYHDYKRVAMEAVLASHGRLAAAYRVVMVEGAGSPAEINLRANDIANMGFAEAVDCPVILVADIDRGGVFAHLVGTLELLSDSERERVKGFVINRFRGDIALLQPGLDWLEARTGKPVLGVLPYVSDLHLEAEDAIDTRQAAKVGPRLKVVVPVLPRISNHTDFDPLRLHPQVELSFVGPGQALPSADLIVLPGSKSVRADLAALRERGWDEAILRHLRYGGRLLGICGGLQMLGERLHDPLGLEGAAGSSAGLGLLALETTLEADKQLRNVQGRLSLEDAPLSGYEIHAGVTRGEALARPAVVLDDGRADGARSVDGNVMGTYLHGLFESTAACSALLRWAGLREVQAVDYQALRERDIERLADLVERNLDTGRLLALCGEPHA.

One can recognise a GATase cobBQ-type domain in the interval 252 to 439 (RLKVVVPVLP…LHGLFESTAA (188 aa)). The Nucleophile role is filled by Cys333. The active site involves His431.

This sequence belongs to the CobB/CobQ family. CobQ subfamily.

The protein operates within cofactor biosynthesis; adenosylcobalamin biosynthesis. Catalyzes amidations at positions B, D, E, and G on adenosylcobyrinic A,C-diamide. NH(2) groups are provided by glutamine, and one molecule of ATP is hydrogenolyzed for each amidation. The polypeptide is Cobyric acid synthase (Pseudomonas aeruginosa (strain UCBPP-PA14)).